Consider the following 436-residue polypeptide: Trigger factor (436 aa).

The PPIase FKBP-type domain occupies 163–248 (GDRVVLDFAG…VKEVAEGVLP (86 aa)).

Belongs to the FKBP-type PPIase family. Tig subfamily.

Its subcellular location is the cytoplasm. It catalyses the reaction [protein]-peptidylproline (omega=180) = [protein]-peptidylproline (omega=0). Its function is as follows. Involved in protein export. Acts as a chaperone by maintaining the newly synthesized protein in an open conformation. Functions as a peptidyl-prolyl cis-trans isomerase. This chain is Trigger factor, found in Bordetella parapertussis (strain 12822 / ATCC BAA-587 / NCTC 13253).